The following is a 210-amino-acid chain: Thymidylate kinase (210 aa).

Gly-10–Ser-17 lines the ATP pocket.

It belongs to the thymidylate kinase family.

It carries out the reaction dTMP + ATP = dTDP + ADP. In terms of biological role, phosphorylation of dTMP to form dTDP in both de novo and salvage pathways of dTTP synthesis. This chain is Thymidylate kinase, found in Pseudomonas syringae pv. syringae (strain B728a).